We begin with the raw amino-acid sequence, 362 residues long: Dihydroorotate dehydrogenase (quinone) (362 aa).

Residues 62 to 66 (AGYDK) and T86 contribute to the FMN site. Substrate is bound at residue K66. Residue 111-115 (NRLGF) participates in substrate binding. The FMN site is built by N139 and N170. Substrate is bound at residue N170. S173 acts as the Nucleophile in catalysis. Substrate is bound at residue N175. Residues K215 and S243 each contribute to the FMN site. 244 to 245 (NT) serves as a coordination point for substrate. FMN-binding positions include G266, G295, and 316-317 (YS).

Belongs to the dihydroorotate dehydrogenase family. Type 2 subfamily. As to quaternary structure, monomer. FMN is required as a cofactor.

It is found in the cell membrane. The catalysed reaction is (S)-dihydroorotate + a quinone = orotate + a quinol. The protein operates within pyrimidine metabolism; UMP biosynthesis via de novo pathway; orotate from (S)-dihydroorotate (quinone route): step 1/1. Functionally, catalyzes the conversion of dihydroorotate to orotate with quinone as electron acceptor. This Sinorhizobium medicae (strain WSM419) (Ensifer medicae) protein is Dihydroorotate dehydrogenase (quinone).